A 228-amino-acid polypeptide reads, in one-letter code: DNA mismatch repair protein MutH (228 aa).

The protein belongs to the MutH family.

Its subcellular location is the cytoplasm. Sequence-specific endonuclease that cleaves unmethylated GATC sequences. It is involved in DNA mismatch repair. The protein is DNA mismatch repair protein MutH of Photorhabdus laumondii subsp. laumondii (strain DSM 15139 / CIP 105565 / TT01) (Photorhabdus luminescens subsp. laumondii).